Reading from the N-terminus, the 145-residue chain is Large ribosomal subunit protein uL13 (145 aa).

Belongs to the universal ribosomal protein uL13 family. Part of the 50S ribosomal subunit.

Functionally, this protein is one of the early assembly proteins of the 50S ribosomal subunit, although it is not seen to bind rRNA by itself. It is important during the early stages of 50S assembly. This is Large ribosomal subunit protein uL13 from Bacillus cereus (strain ZK / E33L).